A 137-amino-acid polypeptide reads, in one-letter code: Small ribosomal subunit protein bS6 (137 aa).

Residues 99-137 (LSPMKAAESREDRRSGGDDRPRRSADSEERQSASQDEEE) are disordered. The segment covering 105–129 (AESREDRRSGGDDRPRRSADSEERQ) has biased composition (basic and acidic residues).

Belongs to the bacterial ribosomal protein bS6 family.

Functionally, binds together with bS18 to 16S ribosomal RNA. This Marinobacter nauticus (strain ATCC 700491 / DSM 11845 / VT8) (Marinobacter aquaeolei) protein is Small ribosomal subunit protein bS6.